Reading from the N-terminus, the 393-residue chain is Cytotoxic and regulatory T-cell molecule (393 aa).

The signal sequence occupies residues 1–16 (MWWGALSLLFWVPVQA). In terms of domain architecture, Ig-like V-type spans 17 to 111 (AFLKMETVTV…SVKTKQVRVT (95 aa)). Residues 17–289 (AFLKMETVTV…HTGLARRKSG (273 aa)) lie on the Extracellular side of the membrane. 2 disulfides stabilise this stretch: cysteine 36/cysteine 96 and cysteine 139/cysteine 194. N-linked (GlcNAc...) asparagine glycans are attached at residues asparagine 85 and asparagine 176. One can recognise an Ig-like C2-type domain in the interval 119 to 208 (PTVEALVLRR…EGLHGRKLVA (90 aa)). Acidic residues predominate over residues 218–228 (DQETSDQETSD). Residues 218–280 (DQETSDQETS…GLSTEASAQH (63 aa)) are disordered. A compositionally biased stretch (low complexity) spans 229–246 (APEQSSLSSQALQQPTST). Over residues 247-256 (VSMMENSSIP) the composition is skewed to polar residues. The segment covering 257-267 (ETDKEEKEHAT) has biased composition (basic and acidic residues). Residues 270-280 (PGLSTEASAQH) are compositionally biased toward polar residues. Residues 290 to 310 (ILLLTLVSFLIFILFIIVQLF) traverse the membrane as a helical segment. Over 311–393 (IMKLRKAHVV…KHSRVPESIV (83 aa)) the chain is Cytoplasmic. The tract at residues 333 to 356 (ESYRSRSNNEETSSQENSSQAPQS) is disordered. The segment covering 342–352 (EETSSQENSSQ) has biased composition (low complexity). The PDZ-binding signature appears at 390 to 393 (ESIV).

It belongs to the nectin family. Monomer. May form homodimer (via Ig-like V-type domain). Interacts (via Ig-like V-type domain) with CADM1 (via Ig-like V-type domain); the interaction competes with CRTAM homodimerization and CADM1 homodimerization. Interacts (via PDZ-binding motif) with SCRIB (via PDZ domain 3); the interaction promotes CRTAM and SCRIB polarization in a subset of CD4+ T-cells. In terms of tissue distribution, in the immune system, expression is restricted to activated class-I MHC-restricted cells, including NKT, NK and CD8+ T-cells (at protein level). Transiently expressed in activated CD8+ T-cells and a subset of activated CD4+ T-cells (at protein level). Expressed in activated intestinal T-cells, specifically intraepithelial CD4+ CD8+ T-cells, intraepithelial CD4+ T-cells and, CD8+ T-cells in the intestine epithelium, lamina propria, Peyer's Patches and mesenteric lymph nodes. Also expressed in spleen, brain and testis.

The protein resides in the cell membrane. In terms of biological role, mediates heterophilic cell-cell adhesion which regulates the activation, differentiation and tissue retention of various T-cell subsets. Interaction with CADM1 promotes natural killer (NK) cell cytotoxicity and IFNG/interferon-gamma secretion by CD8+ T-cells in vitro as well as NK cell-mediated rejection of tumors expressing CADM1 in vivo. Regulates CD8+ T-cell proliferation in response to T-cell receptor (TCR) activation. Appears to be dispensable for CD8+ T-cell-mediated cytotoxicity. Interaction with SCRIB promotes the late phase of cellular polarization of a subset of CD4+ T-cells, which in turn regulates TCR-mediated proliferation and IFNG, IL17 and IL22 production. By interacting with CADM1 on CD8+ dendritic cells, regulates the retention of activated CD8+ T-cells within the draining lymph node. Required for the intestinal retention of intraepithelial CD4+ CD8+ T-cells and, to a lesser extent, intraepithelial and lamina propria CD8+ T-cells and CD4+ T-cells. Interaction with CADM1 promotes the adhesion to gut-associated CD103+ dendritic cells, which may facilitate the expression of gut-homing and adhesion molecules on T-cells and the conversion of CD4+ T-cells into CD4+ CD8+ T-cells. The sequence is that of Cytotoxic and regulatory T-cell molecule from Mus musculus (Mouse).